The sequence spans 1354 residues: Ubiquitin carboxyl-terminal hydrolase 47 (1354 aa).

A compositionally biased stretch (polar residues) spans 114–133 (EQPQLASDESGTADSSGLDD). Residues 114–139 (EQPQLASDESGTADSSGLDDSTQEKF) are disordered. The USP domain maps to 174-549 (VGLVNQAMTC…NAYMLMYRLK (376 aa)). Residue Cys-183 is the Nucleophile of the active site. Residues 408 to 438 (DVEDEKSPQTDSCTDSGAENEGSCHSDQMSN) form a disordered region. Residues 416–438 (QTDSCTDSGAENEGSCHSDQMSN) are compositionally biased toward polar residues. His-488 (proton acceptor) is an active-site residue. Over residues 863–882 (LSLQQHQDGGNGDSSKSTEG) the composition is skewed to polar residues. 2 disordered regions span residues 863–1004 (LSLQ…ESGK) and 1314–1335 (LAKKESSRLQKTGHRVTYSPRK). Basic and acidic residues predominate over residues 920–930 (PEERSDSDVNN). The span at 933-949 (STSSVDSDILSSSHSSD) shows a compositional bias: low complexity. Basic and acidic residues predominate over residues 977 to 986 (KANDGKKETW). Over residues 987–1000 (DTAEEDSGTDSEYD) the composition is skewed to acidic residues.

It belongs to the peptidase C19 family. USP47 subfamily.

Its subcellular location is the cytoplasm. It carries out the reaction Thiol-dependent hydrolysis of ester, thioester, amide, peptide and isopeptide bonds formed by the C-terminal Gly of ubiquitin (a 76-residue protein attached to proteins as an intracellular targeting signal).. In terms of biological role, ubiquitin-specific protease that specifically deubiquitinates monoubiquitinated DNA polymerase beta (polb), stabilizing polb thereby playing a role in base-excision repair (BER). This is Ubiquitin carboxyl-terminal hydrolase 47 (usp47) from Xenopus tropicalis (Western clawed frog).